A 578-amino-acid chain; its full sequence is Membrane protein insertase YidC (578 aa).

Residues 3-23 form a helical membrane-spanning segment; it reads IQRSILIVALAVVSYLLVLQW. The tract at residues 34–72 is disordered; sequence AASASMNTTQGLPDTPSASGTSSDVPTAQSSAAGSEAAD. The span at 37 to 66 shows a compositional bias: polar residues; the sequence is ASMNTTQGLPDTPSASGTSSDVPTAQSSAA. A run of 5 helical transmembrane segments spans residues 361–381, 387–407, 457–477, 500–520, and 535–555; these read LELT…FWLL, LIGN…LAFF, LGGC…YWVL, PFFI…MLNP, and PIIF…YWVV.

This sequence belongs to the OXA1/ALB3/YidC family. Type 1 subfamily. In terms of assembly, interacts with the Sec translocase complex via SecD. Specifically interacts with transmembrane segments of nascent integral membrane proteins during membrane integration.

It is found in the cell inner membrane. Its function is as follows. Required for the insertion and/or proper folding and/or complex formation of integral membrane proteins into the membrane. Involved in integration of membrane proteins that insert both dependently and independently of the Sec translocase complex, as well as at least some lipoproteins. Aids folding of multispanning membrane proteins. The protein is Membrane protein insertase YidC of Pseudomonas aeruginosa (strain ATCC 15692 / DSM 22644 / CIP 104116 / JCM 14847 / LMG 12228 / 1C / PRS 101 / PAO1).